The following is a 692-amino-acid chain: DNA-binding protein RFX2 (692 aa).

Residues 1 to 26 (MQNSEGGADSPATVALRPAAQPVPAS) form a disordered region. Position 26 is a phosphoserine (Ser-26). The RFX-type winged-helix DNA-binding region spans 169 to 244 (TLQWLLDNYE…YHYYGIRLKP (76 aa)). Residues 261-296 (RQQPTHQKPRYRPAQKSDSLGDGSAHSNMHSTPEQA) are disordered. Positions 285–294 (AHSNMHSTPE) are enriched in polar residues. Phosphoserine is present on Ser-386. A compositionally biased stretch (basic and acidic residues) spans 660–685 (DGHSSEADVDGRSLGEPLVKRERSDP). Residues 660–692 (DGHSSEADVDGRSLGEPLVKRERSDPSHPLQGI) are disordered.

This sequence belongs to the RFX family. As to quaternary structure, homodimer; probably only forms homodimers in testis. Heterodimer; heterodimerizes with RFX1 and RFX3. In terms of tissue distribution, expressed at highest level in testis. Expressed at lower level in thymus. Also expressed in stomach, kidney, liver, brain and heart. Weakly expressed in spleen and lung. Within testis, most abundantly present in spermatocytes: present from pachytene spermatocytes to early spermatids (at protein level). Also present in non-germinal tissues.

Its subcellular location is the nucleus. It is found in the cytoplasm. Functionally, transcription factor that acts as a key regulator of spermatogenesis. Acts by regulating expression of genes required for the haploid phase during spermiogenesis, such as genes required for cilium assembly and function. Recognizes and binds the X-box, a regulatory motif with DNA sequence 5'-GTNRCC(0-3N)RGYAAC-3' present on promoters. Probably activates transcription of the testis-specific histone gene H1-6. The chain is DNA-binding protein RFX2 (Rfx2) from Rattus norvegicus (Rat).